A 175-amino-acid chain; its full sequence is ATP synthase subunit b, chloroplastic (175 aa).

The helical transmembrane segment at 21–40 threads the bilayer; that stretch reads LLESNVINIIILISLLIYLG.

It belongs to the ATPase B chain family. F-type ATPases have 2 components, F(1) - the catalytic core - and F(0) - the membrane proton channel. F(1) has five subunits: alpha(3), beta(3), gamma(1), delta(1), epsilon(1). F(0) has four main subunits: a(1), b(1), b'(1) and c(10-14). The alpha and beta chains form an alternating ring which encloses part of the gamma chain. F(1) is attached to F(0) by a central stalk formed by the gamma and epsilon chains, while a peripheral stalk is formed by the delta, b and b' chains.

It is found in the plastid. It localises to the chloroplast thylakoid membrane. Functionally, f(1)F(0) ATP synthase produces ATP from ADP in the presence of a proton or sodium gradient. F-type ATPases consist of two structural domains, F(1) containing the extramembraneous catalytic core and F(0) containing the membrane proton channel, linked together by a central stalk and a peripheral stalk. During catalysis, ATP synthesis in the catalytic domain of F(1) is coupled via a rotary mechanism of the central stalk subunits to proton translocation. In terms of biological role, component of the F(0) channel, it forms part of the peripheral stalk, linking F(1) to F(0). This Cyanidium caldarium (Red alga) protein is ATP synthase subunit b, chloroplastic.